Consider the following 224-residue polypeptide: Urease accessory protein UreF (224 aa).

It belongs to the UreF family. As to quaternary structure, ureD, UreF and UreG form a complex that acts as a GTP-hydrolysis-dependent molecular chaperone, activating the urease apoprotein by helping to assemble the nickel containing metallocenter of UreC. The UreE protein probably delivers the nickel.

It localises to the cytoplasm. Its function is as follows. Required for maturation of urease via the functional incorporation of the urease nickel metallocenter. The polypeptide is Urease accessory protein UreF (Pseudomonas putida (strain ATCC 700007 / DSM 6899 / JCM 31910 / BCRC 17059 / LMG 24140 / F1)).